Reading from the N-terminus, the 61-residue chain is Photosystem II reaction center X protein (61 aa).

The chain crosses the membrane as a helical span at residues 26–46 (IGSFIAAALLIVIPATAFLIF).

Belongs to the PsbX family. Type 2 subfamily. PSII consists of a core antenna complex that captures photons, and an electron transfer chain that converts photonic excitation into a charge separation. PSII forms dimeric complexes.

Its subcellular location is the cellular thylakoid membrane. Involved in the binding and/or turnover of quinones at the Q(B) site of Photosystem II. The protein is Photosystem II reaction center X protein of Prochlorococcus marinus (strain MIT 9301).